We begin with the raw amino-acid sequence, 663 residues long: MNKQNNYSDDSIQVLEGLEAVRKRPGMYIGSTDKRGLHHLVYEIVDNSVDEVLNGYGNEIDVTINKDGSISIEDNGRGMPTGIHKSGKPTVEVIFTVLHAGGKFGQGGYKTSGGLHGVGASVVNALSEWLEVEIHRDGNIYHQSFKNGGSPSSGLVKKGKTKKTGTKVTFKPDDTIFKASTSFNFDVLSERLQESAFLLKNLKITLNDLRSGKERQEHYHYEEGIKEFVSYVNEGKEVLHDVATFSGEANGIEVDVAFQYNDQYSESILSFVNNVRTKDGGTHEVGFKTAMTRVFNDYARRINELKTKDKNLDGNDIREGLTAVVSVRIPEELLQFEGQTKSKLGTSEARSAVDSVVADKLPFYLEEKGQLSKSLVKKAIKAQQAREAARKAREDARSGKKNKRKDTLLSGKLTPAQSKNTDKNELYLVEGDSAGGSAKLGRDRKFQAILPLRGKVINTEKARLEDIFKNEEINTIIHTIGAGVGTDFKIEDSNYNRVIIMTDADTDGAHIQVLLLTFFFKYMKPLVQAGRVFIALPPLYKLEKGKGKTKRVEYAWTDEELNKLQKELGKGFTLQRYKGLGEMNPEQLWETTMNPETRTLIRVQVEDEVRSSKRVTTLMGDKVQPRREWIEKHFEFGMQEDQSILDNSEVQVLENDQFDEEEI.

ATP contacts are provided by residues Tyr7, Asn47, Asp74, 114-120 (GLHGVGA), and Lys341. The segment at 386–418 (REAARKAREDARSGKKNKRKDTLLSGKLTPAQS) is disordered. A compositionally biased stretch (basic and acidic residues) spans 387-398 (EAARKAREDARS). The Toprim domain occupies 424–538 (NELYLVEGDS…AGRVFIALPP (115 aa)). Residues Glu430, Asp503, and Asp505 each coordinate Mg(2+).

The protein belongs to the type II topoisomerase family. ParE type 2 subfamily. As to quaternary structure, heterotetramer composed of ParC and ParE. The cofactor is Mg(2+). Mn(2+) is required as a cofactor. Ca(2+) serves as cofactor.

The catalysed reaction is ATP-dependent breakage, passage and rejoining of double-stranded DNA.. Topoisomerase IV is essential for chromosome segregation. It relaxes supercoiled DNA. Performs the decatenation events required during the replication of a circular DNA molecule. The protein is DNA topoisomerase 4 subunit B of Staphylococcus aureus (strain MRSA252).